Consider the following 871-residue polypeptide: Envelope glycoprotein gp160 (871 aa).

Residues 1-21 form the signal peptide; that stretch reads MKNLIGITLILIITILGIGFS. Residues 22 to 684 are Extracellular-facing; that stretch reads TYYTTVFYGV…DITQWLWYIK (663 aa). C43 and C63 are oxidised to a cystine. 25 N-linked (GlcNAc...) asparagine; by host glycosylation sites follow: N77, N124, N127, N142, N153, N157, N185, N194, N229, N238, N259, N273, N285, N289, N297, N329, N345, N352, N384, N387, N395, N398, N438, N451, and N496. Intrachain disulfides connect C108-C202, C115-C193, C120-C154, C215-C244, and C225-C236. A V1 region spans residues 120–153; that stretch reads CTMTNTTNKTLNSATTTLTPTVNLSSIPNYEVYN. The segment at 154 to 193 is V2; that stretch reads CSFNQTTEFRDKKKQIYSLFYREDIVKEDGNNNSYYLHNC. Residues 292–325 are V3; sequence CERTGNNTRGQVQIGPGMTFYNIENVVGDTRKAY. C292 and C326 are oxidised to a cystine. 2 cysteine pairs are disulfide-bonded: C376–C435 and C383–C408. Positions 383–408 are V4; the sequence is CNLTNWTNTWTANRTNNTHGTLVAPC. The tract at residues 451–458 is V5; it reads NNSYTPQF. A fusion peptide region spans residues 502 to 522; it reads RDVGIGLLFLGFLSAAGSTMG. The segment at 567 to 583 is immunosuppression; sequence LQARMLAVEKYIRDQQL. Residues N602, N613, N626, and N638 are each glycosylated (N-linked (GlcNAc...) asparagine; by host). A coiled-coil region spans residues 645–668; sequence SLLEKAQTQQEKNKQELLELDKWS. The tract at residues 663 to 684 is MPER; binding to GalCer; sequence ELDKWSSLWDWFDITQWLWYIK. The chain crosses the membrane as a helical span at residues 685 to 705; that stretch reads IAIIIVAGLVGLRILMFIVNV. Over 706 to 871 the chain is Cytoplasmic; the sequence is VKQVRQGYTP…IRQGLELALN (166 aa). The YXXL motif; contains endocytosis signal signature appears at 713 to 716; it reads YTPL.

The mature envelope protein (Env) consists of a homotrimer of non-covalently associated gp120-gp41 heterodimers. The resulting complex protrudes from the virus surface as a spike. Interacts with host CD4 and CCR5. Gp120 also interacts with the C-type lectins CD209/DC-SIGN and CLEC4M/DC-SIGNR (collectively referred to as DC-SIGN(R)). As to quaternary structure, the mature envelope protein (Env) consists of a homotrimer of non-covalently associated gp120-gp41 heterodimers. The resulting complex protrudes from the virus surface as a spike. In terms of processing, specific enzymatic cleavages in vivo yield mature proteins. Envelope glycoproteins are synthesized as an inactive precursor that is heavily N-glycosylated and processed likely by host cell furin in the Golgi to yield the mature SU and TM proteins. The cleavage site between SU and TM requires the minimal sequence [KR]-X-[KR]-R.

Its subcellular location is the virion membrane. It is found in the host cell membrane. It localises to the host endosome membrane. Functionally, the surface protein gp120 (SU) attaches the virus to the host lymphoid cell by binding to the primary receptor CD4. This interaction induces a structural rearrangement creating a high affinity binding site for a chemokine coreceptor like CCR5. This peculiar 2 stage receptor-interaction strategy allows gp120 to maintain the highly conserved coreceptor-binding site in a cryptic conformation, protected from neutralizing antibodies. These changes are transmitted to the transmembrane protein gp41 and are thought to activate its fusogenic potential by unmasking its fusion peptide. Surface protein gp120 (SU) may target the virus to gut-associated lymphoid tissue (GALT) by binding host ITGA4/ITGB7 (alpha-4/beta-7 integrins), a complex that mediates T-cell migration to the GALT. Interaction between gp120 and ITGA4/ITGB7 would allow the virus to enter GALT early in the infection, infecting and killing most of GALT's resting CD4+ T-cells. This T-cell depletion is believed to be the major insult to the host immune system leading to AIDS. In terms of biological role, the surface protein gp120 is a ligand for CD209/DC-SIGN and CLEC4M/DC-SIGNR, which are respectively found on dendritic cells (DCs), and on endothelial cells of liver sinusoids and lymph node sinuses. These interactions allow capture of viral particles at mucosal surfaces by these cells and subsequent transmission to permissive cells. DCs are professional antigen presenting cells, critical for host immunity by inducing specific immune responses against a broad variety of pathogens. They act as sentinels in various tissues where they take up antigen, process it, and present it to T-cells following migration to lymphoid organs. SIV subverts the migration properties of dendritic cells to gain access to CD4+ T-cells in lymph nodes. Virus transmission to permissive T-cells occurs either in trans (without DCs infection, through viral capture and transmission), or in cis (following DCs productive infection, through the usual CD4-gp120 interaction), thereby inducing a robust infection. In trans infection, bound virions remain infectious over days and it is proposed that they are not degraded, but protected in non-lysosomal acidic organelles within the DCs close to the cell membrane thus contributing to the viral infectious potential during DCs' migration from the periphery to the lymphoid tissues. On arrival at lymphoid tissues, intact virions recycle back to DCs' cell surface allowing virus transmission to CD4+ T-cells. Virion capture also seems to lead to MHC-II-restricted viral antigen presentation, and probably to the activation of SIV-specific CD4+ cells. Its function is as follows. The transmembrane protein gp41 (TM) acts as a class I viral fusion protein. Under the current model, the protein has at least 3 conformational states: pre-fusion native state, pre-hairpin intermediate state, and post-fusion hairpin state. During fusion of viral and target intracellular membranes, the coiled coil regions (heptad repeats) assume a trimer-of-hairpins structure, positioning the fusion peptide in close proximity to the C-terminal region of the ectodomain. The formation of this structure appears to drive apposition and subsequent fusion of viral and target cell membranes. Complete fusion occurs in host cell endosomes. The virus undergoes clathrin-dependent internalization long before endosomal fusion, thus minimizing the surface exposure of conserved viral epitopes during fusion and reducing the efficacy of inhibitors targeting these epitopes. Membranes fusion leads to delivery of the nucleocapsid into the cytoplasm. Functionally, the envelope glycoprotein gp160 precursor down-modulates cell surface CD4 antigen by interacting with it in the endoplasmic reticulum and blocking its transport to the cell surface. The gp120-gp41 heterodimer allows rapid transcytosis of the virus through CD4 negative cells such as simple epithelial monolayers of the intestinal, rectal and endocervical epithelial barriers. Both gp120 and gp41 specifically recognize glycosphingolipids galactosyl-ceramide (GalCer) or 3' sulfo-galactosyl-ceramide (GalS) present in the lipid rafts structures of epithelial cells. Binding to these alternative receptors allows the rapid transcytosis of the virus through the epithelial cells. This transcytotic vesicle-mediated transport of virions from the apical side to the basolateral side of the epithelial cells does not involve infection of the cells themselves. This Simian immunodeficiency virus (isolate TAN1) (SIV-cpz) protein is Envelope glycoprotein gp160.